Here is a 257-residue protein sequence, read N- to C-terminus: Hydroxyacylglutathione hydrolase (257 aa).

7 residues coordinate Zn(2+): His-56, His-58, Asp-60, His-61, His-112, Asp-131, and His-169.

This sequence belongs to the metallo-beta-lactamase superfamily. Glyoxalase II family. Monomer. Zn(2+) serves as cofactor.

It carries out the reaction an S-(2-hydroxyacyl)glutathione + H2O = a 2-hydroxy carboxylate + glutathione + H(+). The protein operates within secondary metabolite metabolism; methylglyoxal degradation; (R)-lactate from methylglyoxal: step 2/2. Functionally, thiolesterase that catalyzes the hydrolysis of S-D-lactoyl-glutathione to form glutathione and D-lactic acid. The polypeptide is Hydroxyacylglutathione hydrolase (Ectopseudomonas mendocina (strain ymp) (Pseudomonas mendocina)).